We begin with the raw amino-acid sequence, 492 residues long: Catalase (492 aa).

Active-site residues include H65 and N138. Residue Y348 coordinates heme.

Belongs to the catalase family. Homotetramer. The cofactor is heme.

The protein resides in the cytoplasm. It localises to the cytosol. The protein localises to the peroxisome matrix. The catalysed reaction is 2 H2O2 = O2 + 2 H2O. Catalyzes the degradation of hydrogen peroxide (H(2)O(2)) generated by peroxisomal oxidases to water and oxygen, thereby protecting cells from the toxic effects of hydrogen peroxide. In Helianthus annuus (Common sunflower), this protein is Catalase.